Consider the following 379-residue polypeptide: Putative 2-hydroxyacid dehydrogenase YGL185C (379 aa).

NAD(+) is bound by residues 207-208 (SI), 291-293 (LGR), and Asp-317. Arg-293 is an active-site residue. The active site involves Glu-322. The Proton donor role is filled by His-341. 341 to 344 (HLGS) lines the NAD(+) pocket.

Belongs to the D-isomer specific 2-hydroxyacid dehydrogenase family.

The polypeptide is Putative 2-hydroxyacid dehydrogenase YGL185C (Saccharomyces cerevisiae (strain ATCC 204508 / S288c) (Baker's yeast)).